Consider the following 401-residue polypeptide: uncharacterized protein (401 aa).

This sequence belongs to the serpin family.

In terms of biological role, may act as an inhibitor for a host chymotrypsin-like protease. This is an uncharacterized protein from Acanthamoeba polyphaga mimivirus (APMV).